We begin with the raw amino-acid sequence, 208 residues long: Uracil phosphoribosyltransferase (208 aa).

Residues arginine 78, arginine 103, and 130–138 (DPMLATGGS) contribute to the 5-phospho-alpha-D-ribose 1-diphosphate site. Residues isoleucine 193 and 198 to 200 (GDA) each bind uracil. Aspartate 199 is a binding site for 5-phospho-alpha-D-ribose 1-diphosphate.

Belongs to the UPRTase family. It depends on Mg(2+) as a cofactor.

It catalyses the reaction UMP + diphosphate = 5-phospho-alpha-D-ribose 1-diphosphate + uracil. It functions in the pathway pyrimidine metabolism; UMP biosynthesis via salvage pathway; UMP from uracil: step 1/1. With respect to regulation, allosterically activated by GTP. Catalyzes the conversion of uracil and 5-phospho-alpha-D-ribose 1-diphosphate (PRPP) to UMP and diphosphate. This Pelobacter propionicus (strain DSM 2379 / NBRC 103807 / OttBd1) protein is Uracil phosphoribosyltransferase.